The following is a 515-amino-acid chain: 3,4-dehydroadipyl-CoA semialdehyde dehydrogenase (515 aa).

Active-site residues include Glu255 and Cys294. The segment at 470–515 (VMPTCLHGGPRARRRRRGVGRSARAGDVSPPLRRAGRPRGAGSPVA) is disordered. The span at 479 to 488 (PRARRRRRGV) shows a compositional bias: basic residues. Positions 489 to 515 (GRSARAGDVSPPLRRAGRPRGAGSPVA) are enriched in low complexity.

The protein belongs to the aldehyde dehydrogenase family. In terms of assembly, homodimer.

It carries out the reaction (3Z)-6-oxohex-3-enoyl-CoA + NADP(+) + H2O = cis-3,4-dehydroadipyl-CoA + NADPH + 2 H(+). Catalyzes the NADP-dependent oxidation of 3,4-dehydroadipyl-CoA semialdehyde to form cis-3,4-dehydroadipyl-CoA. The sequence is that of 3,4-dehydroadipyl-CoA semialdehyde dehydrogenase (boxD) from Aromatoleum evansii (Azoarcus evansii).